A 609-amino-acid polypeptide reads, in one-letter code: UvrABC system protein C (609 aa).

The 79-residue stretch at 16-94 folds into the GIY-YIG domain; it reads SSAGVYRMYD…IKQYMPRYNV (79 aa). One can recognise a UVR domain in the interval 203–238; the sequence is QQVIATLVGKMEQAAMDLNYEDAARYRDQISALRRV.

The protein belongs to the UvrC family. In terms of assembly, interacts with UvrB in an incision complex.

Its subcellular location is the cytoplasm. In terms of biological role, the UvrABC repair system catalyzes the recognition and processing of DNA lesions. UvrC both incises the 5' and 3' sides of the lesion. The N-terminal half is responsible for the 3' incision and the C-terminal half is responsible for the 5' incision. The polypeptide is UvrABC system protein C (Shewanella loihica (strain ATCC BAA-1088 / PV-4)).